A 1112-amino-acid chain; its full sequence is Phytochrome E (1112 aa).

Residues 1 to 20 (MGFESSSSAASNMKPQPQKS) form a disordered region. The 171-residue stretch at 217–387 (DIGALCDTVV…AFGLQLQMEL (171 aa)) folds into the GAF domain. Cys-322 contributes to the phytochromobilin binding site. PAS domains lie at 595–666 (FVCE…LQGE) and 732–803 (DYKT…LISL). In terms of domain architecture, Histidine kinase spans 877–1096 (YVRQEIKNPL…FFQVDLQVKT (220 aa)).

Belongs to the phytochrome family. In terms of assembly, homodimer. Contains one covalently linked phytochromobilin chromophore.

Functionally, regulatory photoreceptor which exists in two forms that are reversibly interconvertible by light: the Pr form that absorbs maximally in the red region of the spectrum and the Pfr form that absorbs maximally in the far-red region. Photoconversion of Pr to Pfr induces an array of morphogenic responses, whereas reconversion of Pfr to Pr cancels the induction of those responses. Pfr controls the expression of a number of nuclear genes including those encoding the small subunit of ribulose-bisphosphate carboxylase, chlorophyll A/B binding protein, protochlorophyllide reductase, rRNA, etc. It also controls the expression of its own gene(s) in a negative feedback fashion. The polypeptide is Phytochrome E (PHYE) (Arabidopsis thaliana (Mouse-ear cress)).